The sequence spans 344 residues: Melanocyte-stimulating hormone receptor (344 aa).

At 1–37 (MPMQGAQRKLLGSLNSTPTATSNPGLAANHTGAPCLE) the chain is on the extracellular side. N-linked (GlcNAc...) asparagine glycosylation is present at Asn-29. A helical membrane pass occupies residues 38–63 (VSIPDGLFLSLGLVSLVENVLVVAAI). The Cytoplasmic segment spans residues 64–72 (AKNRNLHSS). A helical membrane pass occupies residues 73 to 93 (MYXFICCLALSDLLVSGSNML). Over 94-118 (ETAIILLLEAGTLATRASVVQQLHN) the chain is Extracellular. A helical transmembrane segment spans residues 119–140 (TIDVLTCSSMLCSLCFLGAIAV). Over 141 to 163 (DRYISIFYALRYHSIMTLPRAQR) the chain is Cytoplasmic. Residues 164–183 (AIAAIWVASVLSSTLFITYY) traverse the membrane as a helical segment. At 184–191 (DHAAVLLC) the chain is on the extracellular side. The chain crosses the membrane as a helical span at residues 192–211 (LVVFFLAMLVLMAVLYVHML). At 212-240 (ARACQHAQGIIRLHNRQLPAHKGFGLRGA) the chain is on the cytoplasmic side. A helical membrane pass occupies residues 241–266 (ATLTILLGIFFLCWGPFFLHLTLVVF). The Extracellular segment spans residues 267–279 (CPQHLTCNCIFKN). A helical transmembrane segment spans residues 280–300 (FKVFLTLIICNTIIDPLIYAF). At 301-344 (RSQELRRTLKEVLLCSSWPGCWAEGGGDSVWPGSCVTLRGPLPP) the chain is on the cytoplasmic side. Cys-315 is lipidated: S-palmitoyl cysteine.

The protein belongs to the G-protein coupled receptor 1 family. As to quaternary structure, interacts with MGRN1, but does not undergo MGRN1-mediated ubiquitination; this interaction competes with GNAS-binding and thus inhibits agonist-induced cAMP production. Interacts with OPN3; the interaction results in a decrease in MC1R-mediated cAMP signaling and ultimately a decrease in melanin production in melanocytes.

It is found in the cell membrane. In terms of biological role, receptor for MSH (alpha, beta and gamma) and ACTH. The activity of this receptor is mediated by G proteins which activate adenylate cyclase. Mediates melanogenesis, the production of eumelanin (black/brown) and phaeomelanin (red/yellow), via regulation of cAMP signaling in melanocytes. The polypeptide is Melanocyte-stimulating hormone receptor (MC1R) (Callithrix geoffroyi (Geoffroy's marmoset)).